The following is a 432-amino-acid chain: Adenosylhomocysteinase (432 aa).

At Ser2 the chain carries N-acetylserine. Substrate is bound by residues Thr57, Asp131, and Glu156. At Ser183 the chain carries Phosphoserine. Positions 183 to 350 are NAD binding; the sequence is SVTKSKFDNL…EGRLVNLGCA (168 aa). Substrate is bound by residues Lys186 and Asp190. Lys186 is modified (N6-(2-hydroxyisobutyryl)lysine). A Phosphotyrosine modification is found at Tyr193.

It belongs to the adenosylhomocysteinase family. In terms of assembly, homotetramer. Interaction with AHCYL1. Requires NAD(+) as cofactor.

The protein resides in the cytoplasm. It localises to the melanosome. It is found in the nucleus. The protein localises to the endoplasmic reticulum. It catalyses the reaction S-adenosyl-L-homocysteine + H2O = L-homocysteine + adenosine. It participates in amino-acid biosynthesis; L-homocysteine biosynthesis; L-homocysteine from S-adenosyl-L-homocysteine: step 1/1. Functionally, catalyzes the hydrolysis of S-adenosyl-L-homocysteine to form adenosine and homocysteine. Binds copper ions. This chain is Adenosylhomocysteinase (AHCY), found in Macaca fascicularis (Crab-eating macaque).